The chain runs to 101 residues: Small ribosomal subunit protein uS14 (101 aa).

The protein belongs to the universal ribosomal protein uS14 family. In terms of assembly, part of the 30S ribosomal subunit. Contacts proteins S3 and S10.

Functionally, binds 16S rRNA, required for the assembly of 30S particles and may also be responsible for determining the conformation of the 16S rRNA at the A site. The sequence is that of Small ribosomal subunit protein uS14 from Shewanella putrefaciens (strain CN-32 / ATCC BAA-453).